A 221-amino-acid chain; its full sequence is Uracil-DNA glycosylase 1 (221 aa).

Catalysis depends on Asp61, which acts as the Proton acceptor.

Belongs to the uracil-DNA glycosylase (UDG) superfamily. UNG family.

The protein localises to the cytoplasm. It catalyses the reaction Hydrolyzes single-stranded DNA or mismatched double-stranded DNA and polynucleotides, releasing free uracil.. Excises uracil residues from the DNA which can arise as a result of misincorporation of dUMP residues by DNA polymerase or due to deamination of cytosine. In Listeria monocytogenes serovar 1/2a (strain ATCC BAA-679 / EGD-e), this protein is Uracil-DNA glycosylase 1.